The following is a 642-amino-acid chain: Threonine--tRNA ligase (642 aa).

The TGS domain maps to 1–61 (MPVITLPDGS…ETDSELSIIT (61 aa)). Residues 243–534 (DHRKIGKQLD…LIEEYAGKFP (292 aa)) are catalytic. Positions 334, 385, and 511 each coordinate Zn(2+).

It belongs to the class-II aminoacyl-tRNA synthetase family. Homodimer. The cofactor is Zn(2+).

It is found in the cytoplasm. It catalyses the reaction tRNA(Thr) + L-threonine + ATP = L-threonyl-tRNA(Thr) + AMP + diphosphate + H(+). In terms of biological role, catalyzes the attachment of threonine to tRNA(Thr) in a two-step reaction: L-threonine is first activated by ATP to form Thr-AMP and then transferred to the acceptor end of tRNA(Thr). Also edits incorrectly charged L-seryl-tRNA(Thr). This is Threonine--tRNA ligase from Shewanella halifaxensis (strain HAW-EB4).